The sequence spans 263 residues: Diphthine synthase (263 aa).

Residues leucine 9, aspartate 84, methionine 87, 112 to 113 (SI), leucine 164, alanine 207, and histidine 232 each bind S-adenosyl-L-methionine.

Belongs to the diphthine synthase family. In terms of assembly, homodimer.

The enzyme catalyses 2-[(3S)-amino-3-carboxypropyl]-L-histidyl-[translation elongation factor 2] + 3 S-adenosyl-L-methionine = diphthine-[translation elongation factor 2] + 3 S-adenosyl-L-homocysteine + 3 H(+). It participates in protein modification; peptidyl-diphthamide biosynthesis. Functionally, S-adenosyl-L-methionine-dependent methyltransferase that catalyzes the trimethylation of the amino group of the modified target histidine residue in translation elongation factor 2 (EF-2), to form an intermediate called diphthine. The three successive methylation reactions represent the second step of diphthamide biosynthesis. The polypeptide is Diphthine synthase (Methanosphaera stadtmanae (strain ATCC 43021 / DSM 3091 / JCM 11832 / MCB-3)).